The sequence spans 138 residues: Cell division protein SepF (138 aa).

The protein belongs to the SepF family. In terms of assembly, homodimer. Interacts with FtsZ.

The protein resides in the cytoplasm. Functionally, cell division protein that is part of the divisome complex and is recruited early to the Z-ring. Probably stimulates Z-ring formation, perhaps through the cross-linking of FtsZ protofilaments. Its function overlaps with FtsA. The chain is Cell division protein SepF from Limosilactobacillus reuteri (strain DSM 20016) (Lactobacillus reuteri).